The primary structure comprises 290 residues: Small ribosomal subunit protein uS2 (290 aa).

The interval 269-290 (WEAEASGDWAAESAQPNPETKW) is disordered.

Belongs to the universal ribosomal protein uS2 family. In terms of assembly, component of the small ribosomal subunit. Mature ribosomes consist of a small (40S) and a large (60S) subunit. The 40S subunit contains about 33 different proteins and 1 molecule of RNA (18S). The 60S subunit contains about 49 different proteins and 3 molecules of RNA (25S, 5.8S and 5S). Interacts with rps21.

It localises to the cytoplasm. Functionally, required for the assembly and/or stability of the 40S ribosomal subunit. Required for the processing of the 20S rRNA-precursor to mature 18S rRNA in a late step of the maturation of 40S ribosomal subunits. In Talaromyces marneffei (strain ATCC 18224 / CBS 334.59 / QM 7333) (Penicillium marneffei), this protein is Small ribosomal subunit protein uS2 (rps0).